The following is a 1266-amino-acid chain: Phosphatidylinositol 3,4,5-trisphosphate 5-phosphatase 2A (1266 aa).

In terms of domain architecture, SH2 spans 15 to 111 (WMHRDLSRAA…GLVTTLLYPV (97 aa)). Over residues 114 to 123 (EETTEDRDYS) the composition is skewed to basic and acidic residues. Disordered stretches follow at residues 114–159 (EETT…NVTA) and 879–951 (DMGG…DATT). A compositionally biased stretch (polar residues) spans 136 to 159 (TASTSSMTGSALVSTDTPPENVTA). 2 stretches are compositionally biased toward basic and acidic residues: residues 915–924 (RVSEEGEKSS) and 931–944 (TKEE…KQDP). An NPXY motif motif is present at residues 958-961 (NPAY). Position 961 is a phosphotyrosine (tyrosine 961). 2 disordered regions span residues 986 to 1132 (PLAN…SALD) and 1147 to 1174 (EVEY…SFPS). The span at 994-1012 (PPAGSVGKSKPPSGSSAQG) shows a compositional bias: low complexity. Residues 1045–1056 (RPPPDFPPPPLP) are compositionally biased toward pro residues. The region spanning 1203-1266 (SVDCSVGEWL…LLASLKQQQK (64 aa)) is the SAM domain.

The protein belongs to the inositol 1,4,5-trisphosphate 5-phosphatase family. Tyrosine phosphorylated by the members of the SRC family after exposure to a diverse array of extracellular stimuli.

It is found in the cytoplasm. It localises to the cytosol. Its subcellular location is the cytoskeleton. The protein localises to the membrane. The protein resides in the cell projection. It is found in the filopodium. It localises to the lamellipodium. Its subcellular location is the nucleus. The protein localises to the nucleus speckle. The catalysed reaction is a 1,2-diacyl-sn-glycero-3-phospho-(1D-myo-inositol-3,4,5-trisphosphate) + H2O = a 1,2-diacyl-sn-glycero-3-phospho-(1D-myo-inositol-3,4-bisphosphate) + phosphate. Its function is as follows. Phosphatidylinositol (PtdIns) phosphatase that specifically hydrolyzes the 5-phosphate of phosphatidylinositol-3,4,5-trisphosphate (PtdIns(3,4,5)P3) to produce PtdIns(3,4)P2, thereby negatively regulating the PI3K (phosphoinositide 3-kinase) pathways. Plays a central role in regulation of PI3K-dependent insulin signaling, although the precise molecular mechanisms and signaling pathways remain unclear. Part of a signaling pathway that regulates actin cytoskeleton remodeling. Required for the maintenance and dynamic remodeling of actin structures as well as in endocytosis, having a major impact on ligand-induced EGFR internalization and degradation. Participates in regulation of cortical and submembraneous actin. Regulates cell adhesion and cell spreading. Acts as a negative regulator of the FC-gamma-RIIA receptor (FCGR2A). Mediates signaling from the FC-gamma-RIIB receptor (FCGR2B), playing a central role in terminating signal transduction from activating immune/hematopoietic cell receptor systems. May also hydrolyze PtdIns(1,3,4,5)P4, and could thus affect the levels of the higher inositol polyphosphates like InsP6. This Danio rerio (Zebrafish) protein is Phosphatidylinositol 3,4,5-trisphosphate 5-phosphatase 2A (inppl1a).